The sequence spans 775 residues: E3 ubiquitin-protein ligase UHRF1 (775 aa).

In terms of domain architecture, Ubiquitin-like spans methionine 1–proline 77. Residues proline 81–valine 128 are disordered. 2 tudor-like regions span residues serine 131–arginine 207 and aspartate 214–proline 283. Residues proline 293–glutamate 301 are linker. A PHD-type zinc finger spans residues glycine 299 to aspartate 366. 2 histone H3R2me0 binding regions span residues cysteine 333 to aspartate 337 and proline 353 to aspartate 355. One can recognise a YDG domain in the interval glycine 419 to arginine 582. Positions histidine 445 to valine 446 are required to promote base flipping. DNA contacts are provided by residues alanine 463 to glycine 464 and aspartate 469. 2 required for formation of a 5-methylcytosine-binding pocket regions span residues tyrosine 466–aspartate 469 and tyrosine 478–serine 481. Over residues alanine 616–aspartate 628 the composition is skewed to basic and acidic residues. The segment at alanine 616 to proline 655 is disordered. The segment at cysteine 706–arginine 745 adopts an RING-type zinc-finger fold.

The protein resides in the nucleus. The enzyme catalyses S-ubiquitinyl-[E2 ubiquitin-conjugating enzyme]-L-cysteine + [acceptor protein]-L-lysine = [E2 ubiquitin-conjugating enzyme]-L-cysteine + N(6)-ubiquitinyl-[acceptor protein]-L-lysine.. It functions in the pathway protein modification; protein ubiquitination. Its function is as follows. Multidomain protein that acts as a key epigenetic regulator by bridging DNA methylation and chromatin modification. Specifically recognizes and binds hemimethylated DNA at replication forks via its YDG domain and recruits dnmt1 methyltransferase to ensure faithful propagation of the DNA methylation patterns through DNA replication. In addition to its role in maintenance of DNA methylation, also plays a key role in chromatin modification: through its tudor-like regions and PHD-type zinc fingers, specifically recognizes and binds histone H3 trimethylated at 'Lys-9' (H3K9me3) and unmethylated at 'Arg-2' (H3R2me0), respectively, and recruits chromatin proteins. Enriched in pericentric heterochromatin where it recruits different chromatin modifiers required for this chromatin replication. Also localizes to euchromatic regions where it negatively regulates transcription possibly by impacting DNA methylation and histone modifications. Has E3 ubiquitin-protein ligase activity by mediating the ubiquitination of target proteins. However, it is still unclear how E3 ubiquitin-protein ligase activity is related to its role in chromatin in vivo. This is E3 ubiquitin-protein ligase UHRF1 (uhrf1) from Xenopus tropicalis (Western clawed frog).